We begin with the raw amino-acid sequence, 584 residues long: UBX domain-containing protein 2 (584 aa).

Topologically, residues 1–80 (MPVVNHEDSE…PTQTSTPMAE (80 aa)) are cytoplasmic. Residues 81 to 101 (TLVPPALGPRPLLFTASLPVV) form a helical membrane-spanning segment. At 102 to 151 (RPLPANFRNDFRTIGLNGRSNTVWSMFESFSYDGNPFLFILLLIPRIINR) the chain is on the lumenal side. A helical membrane pass occupies residues 152–172 (LSATIFTFFCTLLSLHSISGG). Over 173-584 (GNSGKPKISK…DEEDEENEEQ (412 aa)) the chain is Cytoplasmic. The UBX domain maps to 426–570 (ETTGKQATLQ…WPNGSLLVEA (145 aa)).

Component of the DOA10 ubiquitin ligase complex which contains E3 ligase SSM4/DOA10 and CDC48-binding protein UBX2/SEL1. Component of the HRD1 ubiquitin ligase complex which contains the E3 ligase HRD1, its cofactors HRD3, USA1 and DER1, substrate recruiting factor YOS9 and UBX2. In ERAD-L, HRD3 and YOS9 jointly bind misfolded glycoproteins in the endoplasmic reticulum (ER) lumen. Movement of ERAD-L substrates through the ER membrane is facilitated by HRD1 and DER1 which have lateral gates facing each other and which distort the membrane region between the lateral gates, making it much thinner than a normal phospholipid bilayer. Substrates insert into the membrane as a hairpin loop with one strand interacting with DER1 and the other with HRD1. Both the DOA10 and HRD1 ubiquitin ligase complexes interact with the heterotrimeric CDC48-NPL4-UFD1 ATPase complex which is recruited by UBX2 via its interaction with CDC48 and which moves ubiquitinated substrates to the cytosol for targeting to the proteasome.

It localises to the endoplasmic reticulum membrane. Integral endoplasmic reticulum membrane protein that coordinates the assembly of the ER-associated protein degradation (ERAD) machinery at the ER membrane. Mediates binding of CDC48 to the E3 ubiquitin ligases SSM4/DOA10 and HRD1, and to ERAD substrates. Component of the DOA10 ubiquitin ligase complex, which is part of the ERAD-C pathway responsible for the rapid degradation of membrane proteins with misfolded cytoplasmic domains. ERAD-C substrates are ubiquitinated through DOA10 in conjunction with the E2 ubiquitin-conjugating enzymes UBC6 and UBC7-CUE1. Also a component of the HRD1 ubiquitin ligase complex, which is part of the ERAD-L and ERAD-M pathways responsible for the rapid degradation of soluble lumenal and membrane proteins with misfolded lumenal domains (ERAD-L), or ER-membrane proteins with misfolded transmembrane domains (ERAD-M). ERAD-L substrates are ubiquitinated through HRD1 in conjunction with the E2 ubiquitin-conjugating enzymes UBC1 and UBC7-CUE1. Ubiquitinated substrates are then removed to the cytosol via the action of the CDC48-NPL4-UFD1 ATPase complex and targeted to the proteasome. The protein is UBX domain-containing protein 2 (UBX2) of Saccharomyces cerevisiae (strain ATCC 204508 / S288c) (Baker's yeast).